The following is a 398-amino-acid chain: Succinate--CoA ligase [ADP-forming] subunit beta (398 aa).

The region spanning 9–253 is the ATP-grasp domain; it reads MALLNERGVS…AGASDPLEQE (245 aa). Residues K46, 53–55, V111, and E116 each bind ATP; that span reads GRG. The Mg(2+) site is built by N208 and D222. Substrate is bound by residues N273 and 330 to 332; that span reads GIM.

It belongs to the succinate/malate CoA ligase beta subunit family. Heterotetramer of two alpha and two beta subunits. Requires Mg(2+) as cofactor.

It catalyses the reaction succinate + ATP + CoA = succinyl-CoA + ADP + phosphate. The catalysed reaction is GTP + succinate + CoA = succinyl-CoA + GDP + phosphate. It participates in carbohydrate metabolism; tricarboxylic acid cycle; succinate from succinyl-CoA (ligase route): step 1/1. Succinyl-CoA synthetase functions in the citric acid cycle (TCA), coupling the hydrolysis of succinyl-CoA to the synthesis of either ATP or GTP and thus represents the only step of substrate-level phosphorylation in the TCA. The beta subunit provides nucleotide specificity of the enzyme and binds the substrate succinate, while the binding sites for coenzyme A and phosphate are found in the alpha subunit. The protein is Succinate--CoA ligase [ADP-forming] subunit beta of Zymomonas mobilis subsp. mobilis (strain ATCC 31821 / ZM4 / CP4).